An 87-amino-acid chain; its full sequence is Neurotoxin LmNaTx64.1 (87 aa).

The signal sequence occupies residues 1 to 18 (MKILFLIILTAFFIGVHC). The LCN-type CS-alpha/beta domain maps to 19-85 (KHGYPIIRAG…TWSRATNKCK (67 aa)). Intrachain disulfides connect C33/C84, C37/C58, C44/C65, and C48/C67. Residue C84 is modified to Cysteine amide.

The protein belongs to the long (4 C-C) scorpion toxin superfamily. Sodium channel inhibitor family. Beta subfamily. Expressed by the venom gland.

It is found in the secreted. In terms of biological role, binds voltage-independently at site-4 of sodium channels (Nav) and shift the voltage of activation toward more negative potentials thereby affecting sodium channel activation and promoting spontaneous and repetitive firing. This Lychas mucronatus (Chinese swimming scorpion) protein is Neurotoxin LmNaTx64.1.